We begin with the raw amino-acid sequence, 743 residues long: DEAD-box ATP-dependent RNA helicase 3B, chloroplastic (743 aa).

Residues 1-37 constitute a chloroplast transit peptide; sequence MASLTLPALALALSNPGAVRLRAAAFRCWALRRRGWA. Positions 60–79 are disordered; it reads GSDDEDGEGPYGSDADEGFE. A compositionally biased stretch (acidic residues) spans 61–79; that stretch reads SDDEDGEGPYGSDADEGFE. A Q motif motif is present at residues 88 to 116; that stretch reads LAIARLGLPDELVATLEKRGITHLFPIQR. The region spanning 119–295 is the Helicase ATP-binding domain; it reads LIPALEGRDL…RRYLNNPLTI (177 aa). 132–139 is a binding site for ATP; the sequence is AKTGTGKT. The DEAD box signature appears at 243 to 246; the sequence is DEAD. The 146-residue stretch at 324–469 folds into the Helicase C-terminal domain; the sequence is VLSDLITVYA…ISPPSIEEVL (146 aa). Residues 606 to 719 are disordered; it reads LTKISKLPAL…RSSSFGGRES (114 aa). The segment covering 642-653 has biased composition (gly residues); sequence GGGASRGRGGWD. A compositionally biased stretch (basic and acidic residues) spans 657-671; the sequence is EDRFRRGGRSLRSDN. The segment covering 688–719 has biased composition (low complexity); sequence RSSSFGSRSSSYSSRGSPSFGGRSSSFGGRES. The CCHC-type zinc-finger motif lies at 725–742; the sequence is GACFNCGESGHRATDCPN.

Belongs to the DEAD box helicase family. DDX21/DDX50 subfamily.

The protein resides in the plastid. Its subcellular location is the chloroplast stroma. The enzyme catalyses ATP + H2O = ADP + phosphate + H(+). Functionally, nuclear genome-encoded factor involved in ribosome biogenesis in chloroplasts. Binds specific group II introns in chloroplasts and facilitates their splicing. Is required for rRNA maturation in plastids and may contribute to the assembly of the large (50S) ribosomal subunit. Required for normal development of chloroplasts. The sequence is that of DEAD-box ATP-dependent RNA helicase 3B, chloroplastic from Zea mays (Maize).